The chain runs to 71 residues: Protein KleB (71 aa).

Residues 9 to 28 (VTTNCRRCGKSISTLSRSLI) constitute a DNA-binding region (H-T-H motif).

The sequence is that of Protein KleB (kleB) from Escherichia coli.